A 257-amino-acid chain; its full sequence is Anamorsin homolog (257 aa).

The tract at residues 1–134 (MSDRKNVLFV…KVGSSDKVTL (134 aa)) is N-terminal SAM-like domain. The interval 135-168 (NPEMKENVVSAWKLDDNNSETISEDDLLEADDLI) is linker. The [2Fe-2S] cluster site is built by Cys178, Cys187, Cys190, and Cys192. Residues 178 to 192 (CATTKKAKACKDCSC) are fe-S binding site A. Cys218, Cys221, Cys229, and Cys232 together coordinate [4Fe-4S] cluster. 2 consecutive short sequence motifs (cx2C motif) follow at residues 218 to 221 (CGSC) and 229 to 232 (CASC). The interval 218–232 (CGSCYLGDAFRCASC) is fe-S binding site B.

It belongs to the anamorsin family. In terms of assembly, monomer. [2Fe-2S] cluster serves as cofactor. [4Fe-4S] cluster is required as a cofactor.

The protein resides in the cytoplasm. Its subcellular location is the mitochondrion intermembrane space. Functionally, component of the cytosolic iron-sulfur (Fe-S) protein assembly (CIA) machinery. Required for the maturation of extramitochondrial Fe-S proteins. Part of an electron transfer chain functioning in an early step of cytosolic Fe-S biogenesis, facilitating the de novo assembly of a [4Fe-4S] cluster on the cytosolic Fe-S scaffold complex. Electrons are transferred from NADPH via a FAD- and FMN-containing diflavin oxidoreductase. Together with the diflavin oxidoreductase, also required for the assembly of the diferric tyrosyl radical cofactor of ribonucleotide reductase (RNR), probably by providing electrons for reduction during radical cofactor maturation in the catalytic small subunit. In Acyrthosiphon pisum (Pea aphid), this protein is Anamorsin homolog.